Reading from the N-terminus, the 101-residue chain is Protein Tat (101 aa).

The disordered stretch occupies residues 1–20 (MEPVDPNLEPWKHPGSQPTT). Residues 1-24 (MEPVDPNLEPWKHPGSQPTTACSN) form an interaction with human CREBBP region. The segment at 1 to 48 (MEPVDPNLEPWKHPGSQPTTACSNCYCKVCCWHCQLCFLKKGLGISYG) is transactivation. Zn(2+) contacts are provided by cysteine 22, cysteine 25, and cysteine 27. The cysteine-rich stretch occupies residues 22–37 (CSNCYCKVCCWHCQLC). Residue lysine 28 is modified to N6-acetyllysine; by host PCAF. Residues cysteine 30, histidine 33, cysteine 34, and cysteine 37 each contribute to the Zn(2+) site. The tract at residues 38-48 (FLKKGLGISYG) is core. The disordered stretch occupies residues 48–101 (GKKKRKPRRGPPQGSKDHQTLIPKQPLPQSQRVSAGQEESKKKVESKAKTDRFA). A Nuclear localization signal, RNA-binding (TAR), and protein transduction motif is present at residues 49–57 (KKKRKPRRG). The interval 49–86 (KKKRKPRRGPPQGSKDHQTLIPKQPLPQSQRVSAGQEE) is interaction with the host capping enzyme RNGTT. An N6-acetyllysine; by host EP300 and GCN5L2 mark is found at lysine 50 and lysine 51. Residue arginine 52 is modified to Asymmetric dimethylarginine; by host PRMT6. Lysine 71 is covalently cross-linked (Glycyl lysine isopeptide (Lys-Gly) (interchain with G-Cter in ubiquitin)). The segment covering 85–101 (EESKKKVESKAKTDRFA) has biased composition (basic and acidic residues).

The protein belongs to the lentiviruses Tat family. In terms of assembly, interacts with host CCNT1. Associates with the P-TEFb complex composed at least of Tat, P-TEFb (CDK9 and CCNT1), TAR RNA, RNA Pol II. Recruits the HATs CREBBP, TAF1/TFIID, EP300, PCAF and GCN5L2. Interacts with host KAT5/Tip60; this interaction targets the latter to degradation. Interacts with the host deacetylase SIRT1. Interacts with host capping enzyme RNGTT; this interaction stimulates RNGTT. Binds to host KDR, and to the host integrins ITGAV/ITGB3 and ITGA5/ITGB1. Interacts with host KPNB1/importin beta-1 without previous binding to KPNA1/importin alpha-1. Interacts with EIF2AK2. Interacts with host nucleosome assembly protein NAP1L1; this interaction may be required for the transport of Tat within the nucleus, since the two proteins interact at the nuclear rim. Interacts with host C1QBP/SF2P32; this interaction involves lysine-acetylated Tat. Interacts with the host chemokine receptors CCR2, CCR3 and CXCR4. Interacts with host DPP4/CD26; this interaction may trigger an anti-proliferative effect. Interacts with host LDLR. Interacts with the host extracellular matrix metalloproteinase MMP1. Interacts with host PRMT6; this interaction mediates Tat's methylation. Interacts with, and is ubiquitinated by MDM2/Hdm2. Interacts with host PSMC3 and HTATIP2. Interacts with STAB1; this interaction may overcome SATB1-mediated repression of IL2 and IL2RA (interleukin) in T cells by binding to the same domain than HDAC1. Interacts (when acetylated) with human CDK13, thereby increasing HIV-1 mRNA splicing and promoting the production of the doubly spliced HIV-1 protein Nef. Interacts with host TBP; this interaction modulates the activity of transcriptional pre-initiation complex. Interacts with host RELA. Interacts with host PLSCR1; this interaction negatively regulates Tat transactivation activity by altering its subcellular distribution. Post-translationally, asymmetrical arginine methylation by host PRMT6 seems to diminish the transactivation capacity of Tat and affects the interaction with host CCNT1. Acetylation by EP300, CREBBP, GCN5L2/GCN5 and PCAF regulates the transactivation activity of Tat. EP300-mediated acetylation of Lys-50 promotes dissociation of Tat from the TAR RNA through the competitive binding to PCAF's bromodomain. In addition, the non-acetylated Tat's N-terminus can also interact with PCAF. PCAF-mediated acetylation of Lys-28 enhances Tat's binding to CCNT1. Lys-50 is deacetylated by SIRT1. In terms of processing, polyubiquitination by host MDM2 does not target Tat to degradation, but activates its transactivation function and fosters interaction with CCNT1 and TAR RNA. Post-translationally, phosphorylated by EIF2AK2 on serine and threonine residues adjacent to the basic region important for TAR RNA binding and function. Phosphorylation of Tat by EIF2AK2 is dependent on the prior activation of EIF2AK2 by dsRNA.

The protein resides in the host nucleus. Its subcellular location is the host nucleolus. The protein localises to the host cytoplasm. It localises to the secreted. Transcriptional activator that increases RNA Pol II processivity, thereby increasing the level of full-length viral transcripts. Recognizes a hairpin structure at the 5'-LTR of the nascent viral mRNAs referred to as the transactivation responsive RNA element (TAR) and recruits the cyclin T1-CDK9 complex (P-TEFb complex) that will in turn hyperphosphorylate the RNA polymerase II to allow efficient elongation. The CDK9 component of P-TEFb and other Tat-activated kinases hyperphosphorylate the C-terminus of RNA Pol II that becomes stabilized and much more processive. Other factors such as HTATSF1/Tat-SF1, SUPT5H/SPT5, and HTATIP2 are also important for Tat's function. Besides its effect on RNA Pol II processivity, Tat induces chromatin remodeling of proviral genes by recruiting the histone acetyltransferases (HATs) CREBBP, EP300 and PCAF to the chromatin. This also contributes to the increase in proviral transcription rate, especially when the provirus integrates in transcriptionally silent region of the host genome. To ensure maximal activation of the LTR, Tat mediates nuclear translocation of NF-kappa-B by interacting with host RELA. Through its interaction with host TBP, Tat may also modulate transcription initiation. Tat can reactivate a latently infected cell by penetrating in it and transactivating its LTR promoter. In the cytoplasm, Tat is thought to act as a translational activator of HIV-1 mRNAs. In terms of biological role, extracellular circulating Tat can be endocytosed by surrounding uninfected cells via the binding to several surface receptors such as CD26, CXCR4, heparan sulfate proteoglycans (HSPG) or LDLR. Neurons are rarely infected, but they internalize Tat via their LDLR. Through its interaction with nuclear HATs, Tat is potentially able to control the acetylation-dependent cellular gene expression. Modulates the expression of many cellular genes involved in cell survival, proliferation or in coding for cytokines or cytokine receptors. Tat plays a role in T-cell and neurons apoptosis. Tat induced neurotoxicity and apoptosis probably contribute to neuroAIDS. Circulating Tat also acts as a chemokine-like and/or growth factor-like molecule that binds to specific receptors on the surface of the cells, affecting many cellular pathways. In the vascular system, Tat binds to ITGAV/ITGB3 and ITGA5/ITGB1 integrins dimers at the surface of endothelial cells and competes with bFGF for heparin-binding sites, leading to an excess of soluble bFGF. The sequence is that of Protein Tat from Human immunodeficiency virus type 1 group M subtype A (isolate U455) (HIV-1).